The primary structure comprises 627 residues: Membrane protein insertase YidC (627 aa).

The helical transmembrane segment at 8–28 (LFLALILSMGIWMGVNYFFFP) threads the bilayer. Residues 33–57 (KKNTETKQTQSDKTSENTKQQITSG) show a composition bias toward polar residues. The disordered stretch occupies residues 33–68 (KKNTETKQTQSDKTSENTKQQITSGKTKESNSADPV). Over residues 58–68 (KTKESNSADPV) the composition is skewed to basic and acidic residues. 4 helical membrane passes run 417-437 (FTIP…KLVF), 488-508 (VGGC…YTAF), 536-556 (AIPY…LMVG), and 575-595 (MLMY…PSGV).

The protein belongs to the OXA1/ALB3/YidC family. Type 1 subfamily. In terms of assembly, interacts with the Sec translocase complex via SecD. Specifically interacts with transmembrane segments of nascent integral membrane proteins during membrane integration.

The protein resides in the cell inner membrane. Its function is as follows. Required for the insertion and/or proper folding and/or complex formation of integral membrane proteins into the membrane. Involved in integration of membrane proteins that insert both dependently and independently of the Sec translocase complex, as well as at least some lipoproteins. Aids folding of multispanning membrane proteins. The sequence is that of Membrane protein insertase YidC from Leptospira interrogans serogroup Icterohaemorrhagiae serovar copenhageni (strain Fiocruz L1-130).